Consider the following 341-residue polypeptide: UDP-3-O-acylglucosamine N-acyltransferase (341 aa).

The active-site Proton acceptor is the His242.

This sequence belongs to the transferase hexapeptide repeat family. LpxD subfamily. As to quaternary structure, homotrimer.

The catalysed reaction is a UDP-3-O-[(3R)-3-hydroxyacyl]-alpha-D-glucosamine + a (3R)-hydroxyacyl-[ACP] = a UDP-2-N,3-O-bis[(3R)-3-hydroxyacyl]-alpha-D-glucosamine + holo-[ACP] + H(+). The protein operates within bacterial outer membrane biogenesis; LPS lipid A biosynthesis. In terms of biological role, catalyzes the N-acylation of UDP-3-O-acylglucosamine using 3-hydroxyacyl-ACP as the acyl donor. Is involved in the biosynthesis of lipid A, a phosphorylated glycolipid that anchors the lipopolysaccharide to the outer membrane of the cell. The polypeptide is UDP-3-O-acylglucosamine N-acyltransferase (Haemophilus influenzae (strain ATCC 51907 / DSM 11121 / KW20 / Rd)).